Consider the following 109-residue polypeptide: Nucleoid-associated protein ETA_24730 (109 aa).

It belongs to the YbaB/EbfC family. In terms of assembly, homodimer.

Its subcellular location is the cytoplasm. The protein localises to the nucleoid. Functionally, binds to DNA and alters its conformation. May be involved in regulation of gene expression, nucleoid organization and DNA protection. The sequence is that of Nucleoid-associated protein ETA_24730 from Erwinia tasmaniensis (strain DSM 17950 / CFBP 7177 / CIP 109463 / NCPPB 4357 / Et1/99).